The primary structure comprises 130 residues: uncharacterized protein (130 aa).

Transmembrane regions (helical) follow at residues Phe35–Leu57 and Ile72–Leu91.

The protein resides in the cell membrane. This is an uncharacterized protein from Pasteurella multocida (strain Pm70).